We begin with the raw amino-acid sequence, 432 residues long: Glutamate-1-semialdehyde 2,1-aminomutase (432 aa).

K272 is modified (N6-(pyridoxal phosphate)lysine).

The protein belongs to the class-III pyridoxal-phosphate-dependent aminotransferase family. HemL subfamily. As to quaternary structure, homodimer. Pyridoxal 5'-phosphate is required as a cofactor.

It is found in the cytoplasm. It carries out the reaction (S)-4-amino-5-oxopentanoate = 5-aminolevulinate. It participates in porphyrin-containing compound metabolism; protoporphyrin-IX biosynthesis; 5-aminolevulinate from L-glutamyl-tRNA(Glu): step 2/2. It functions in the pathway porphyrin-containing compound metabolism; chlorophyll biosynthesis. The polypeptide is Glutamate-1-semialdehyde 2,1-aminomutase (Nostoc punctiforme (strain ATCC 29133 / PCC 73102)).